A 227-amino-acid polypeptide reads, in one-letter code: AN1-type zinc finger protein 3 (227 aa).

The A20-type zinc finger occupies P12–P44. The Zn(2+) site is built by C18, C20, C32, and C35. Disordered regions lie at residues K41–G100 and P113–R148. The segment covering A49–L59 has biased composition (polar residues). The span at S66–T77 shows a compositional bias: low complexity. Composition is skewed to polar residues over residues L78 to P94 and P113 to E127. Residues R135–R148 show a composition bias toward basic and acidic residues. The AN1-type zinc finger occupies Q151–G200. Zn(2+) contacts are provided by C157, C160, C174, C176, C181, H184, H190, and C192.

The protein is AN1-type zinc finger protein 3 (ZFAND3) of Homo sapiens (Human).